The sequence spans 356 residues: Dihydroorotate dehydrogenase (quinone) (356 aa).

Residues Ala66–Lys70 and Thr90 each bind FMN. Lys70 is a binding site for substrate. Substrate is bound at residue Asn115–Phe119. Residues Asn143 and Asn176 each contribute to the FMN site. Asn176 provides a ligand contact to substrate. Ser179 acts as the Nucleophile in catalysis. Substrate is bound at residue Asn181. Lys212 and Thr240 together coordinate FMN. Asn241 to Thr242 lines the substrate pocket. Residues Gly266, Gly295, and Tyr316–Thr317 contribute to the FMN site.

The protein belongs to the dihydroorotate dehydrogenase family. Type 2 subfamily. In terms of assembly, monomer. It depends on FMN as a cofactor.

It localises to the cell membrane. The catalysed reaction is (S)-dihydroorotate + a quinone = orotate + a quinol. Its pathway is pyrimidine metabolism; UMP biosynthesis via de novo pathway; orotate from (S)-dihydroorotate (quinone route): step 1/1. Catalyzes the conversion of dihydroorotate to orotate with quinone as electron acceptor. The polypeptide is Dihydroorotate dehydrogenase (quinone) (Rhodococcus opacus (strain B4)).